The primary structure comprises 194 residues: Imidazoleglycerol-phosphate dehydratase (194 aa).

Belongs to the imidazoleglycerol-phosphate dehydratase family.

Its subcellular location is the cytoplasm. The catalysed reaction is D-erythro-1-(imidazol-4-yl)glycerol 3-phosphate = 3-(imidazol-4-yl)-2-oxopropyl phosphate + H2O. Its pathway is amino-acid biosynthesis; L-histidine biosynthesis; L-histidine from 5-phospho-alpha-D-ribose 1-diphosphate: step 6/9. This chain is Imidazoleglycerol-phosphate dehydratase, found in Lacticaseibacillus casei (strain BL23) (Lactobacillus casei).